The following is a 156-amino-acid chain: Transcription elongation factor GreA (156 aa).

Residues 1–84 adopt a coiled-coil conformation; sequence MAKYTISKHR…IEDVMRSTDE (84 aa).

This sequence belongs to the GreA/GreB family.

In terms of biological role, necessary for efficient RNA polymerase transcription elongation past template-encoded arresting sites. The arresting sites in DNA have the property of trapping a certain fraction of elongating RNA polymerases that pass through, resulting in locked ternary complexes. Cleavage of the nascent transcript by cleavage factors such as GreA or GreB allows the resumption of elongation from the new 3'terminus. GreA releases sequences of 2 to 3 nucleotides. This chain is Transcription elongation factor GreA, found in Ureaplasma urealyticum serovar 10 (strain ATCC 33699 / Western).